Consider the following 345-residue polypeptide: Trans-3-hydroxy-L-proline dehydratase (345 aa).

The active-site Proton acceptor is the Ser90. Residues 91-92, Asp252, and 257-258 contribute to the substrate site; these read GS and GT.

This sequence belongs to the proline racemase family.

It carries out the reaction trans-3-hydroxy-L-proline = 1-pyrroline-2-carboxylate + H2O. Catalyzes the dehydration of trans-3-hydroxy-L-proline (t3LHyp) to Delta(1)-pyrroline-2-carboxylate (Pyr2C). May be involved in a degradation pathway that converts t3LHyp to L-proline, which would allow S.novella to grow on t3LHyp as a sole carbon source. This is Trans-3-hydroxy-L-proline dehydratase from Ancylobacter novellus (strain ATCC 8093 / DSM 506 / JCM 20403 / CCM 1077 / IAM 12100 / NBRC 12443 / NCIMB 10456) (Starkeya novella).